The sequence spans 502 residues: Protein YdgA (502 aa).

Residues Met1 to Thr19 form the signal peptide.

To E.coli YihF and H.influenzae HI_1236. Homodimer.

Its subcellular location is the cell inner membrane. In Escherichia coli (strain K12), this protein is Protein YdgA (ydgA).